The following is a 467-amino-acid chain: UDP-N-acetylmuramate--L-alanine ligase (467 aa).

Position 112–118 (112–118) interacts with ATP; the sequence is GTHGKTT.

Belongs to the MurCDEF family.

Its subcellular location is the cytoplasm. The catalysed reaction is UDP-N-acetyl-alpha-D-muramate + L-alanine + ATP = UDP-N-acetyl-alpha-D-muramoyl-L-alanine + ADP + phosphate + H(+). It participates in cell wall biogenesis; peptidoglycan biosynthesis. In terms of biological role, cell wall formation. This Polaromonas sp. (strain JS666 / ATCC BAA-500) protein is UDP-N-acetylmuramate--L-alanine ligase.